Consider the following 130-residue polypeptide: Protein ApaG (130 aa).

Residues 3-127 (SAVTRGIEVT…FSLDVPEQRR (125 aa)) enclose the ApaG domain.

This is Protein ApaG from Brucella suis biovar 1 (strain 1330).